Here is a 290-residue protein sequence, read N- to C-terminus: Formamidopyrimidine-DNA glycosylase (290 aa).

Catalysis depends on proline 2, which acts as the Schiff-base intermediate with DNA. Catalysis depends on glutamate 3, which acts as the Proton donor. Residue lysine 58 is the Proton donor; for beta-elimination activity of the active site. DNA contacts are provided by histidine 97, arginine 122, and lysine 165. The segment at 250-290 adopts an FPG-type; atypical zinc-finger fold; sequence KVYGREGEPCPGCDCDPVRTGGIARIVQSGRSTFYCPRHQR. Arginine 280 serves as the catalytic Proton donor; for delta-elimination activity.

It belongs to the FPG family. Monomer. Requires Zn(2+) as cofactor.

The catalysed reaction is Hydrolysis of DNA containing ring-opened 7-methylguanine residues, releasing 2,6-diamino-4-hydroxy-5-(N-methyl)formamidopyrimidine.. The enzyme catalyses 2'-deoxyribonucleotide-(2'-deoxyribose 5'-phosphate)-2'-deoxyribonucleotide-DNA = a 3'-end 2'-deoxyribonucleotide-(2,3-dehydro-2,3-deoxyribose 5'-phosphate)-DNA + a 5'-end 5'-phospho-2'-deoxyribonucleoside-DNA + H(+). Functionally, involved in base excision repair of DNA damaged by oxidation or by mutagenic agents. Acts as a DNA glycosylase that recognizes and removes damaged bases. Has a preference for oxidized purines, such as 7,8-dihydro-8-oxoguanine (8-oxoG). Has AP (apurinic/apyrimidinic) lyase activity and introduces nicks in the DNA strand. Cleaves the DNA backbone by beta-delta elimination to generate a single-strand break at the site of the removed base with both 3'- and 5'-phosphates. The sequence is that of Formamidopyrimidine-DNA glycosylase from Rhodospirillum centenum (strain ATCC 51521 / SW).